Reading from the N-terminus, the 318-residue chain is Sucrose operon repressor (318 aa).

The HTH lacI-type domain maps to 1-56 (MIKLEDVANKAGVSVTTVSRVINRKGYLSDATISKVEKAMQDLHYIPNAAARSLQG). A DNA-binding region (H-T-H motif) is located at residues 4-23 (LEDVANKAGVSVTTVSRVIN).

This protein may control the expression of the genes that are involved in the transport and catabolism of sucrose. This is Sucrose operon repressor (sacR) from Lactococcus lactis subsp. lactis (Streptococcus lactis).